A 505-amino-acid chain; its full sequence is ATP synthase subunit alpha (505 aa).

ATP is bound at residue 170–177 (GDRQTGKT).

This sequence belongs to the ATPase alpha/beta chains family. F-type ATPases have 2 components, CF(1) - the catalytic core - and CF(0) - the membrane proton channel. CF(1) has five subunits: alpha(3), beta(3), gamma(1), delta(1), epsilon(1). CF(0) has four main subunits: a(1), b(1), b'(1) and c(9-12).

It is found in the cellular thylakoid membrane. The enzyme catalyses ATP + H2O + 4 H(+)(in) = ADP + phosphate + 5 H(+)(out). Produces ATP from ADP in the presence of a proton gradient across the membrane. The alpha chain is a regulatory subunit. In Prochlorococcus marinus (strain MIT 9515), this protein is ATP synthase subunit alpha.